Consider the following 96-residue polypeptide: Small ribosomal subunit protein bS18 (96 aa).

It belongs to the bacterial ribosomal protein bS18 family. Part of the 30S ribosomal subunit. Forms a tight heterodimer with protein bS6.

In terms of biological role, binds as a heterodimer with protein bS6 to the central domain of the 16S rRNA, where it helps stabilize the platform of the 30S subunit. In Borreliella afzelii (strain PKo) (Borrelia afzelii), this protein is Small ribosomal subunit protein bS18.